We begin with the raw amino-acid sequence, 200 residues long: Phospholipase A2 inhibitor 1 (200 aa).

The N-terminal stretch at 1–19 (MKSLHIICLLFIFVARGNS) is a signal peptide. Cystine bridges form between Cys22-Cys46, Cys25-Cys32, Cys39-Cys67, Cys73-Cys94, Cys95-Cys100, Cys118-Cys143, Cys136-Cys165, and Cys169-Cys191. Asn176 carries N-linked (GlcNAc...) asparagine glycosylation.

The protein belongs to the CNF-like-inhibitor family. Occurs as a mixture of oligomers. Tetrameric arrangement appears to be the predominant quaternary structure. In terms of processing, N-glycosylated. Expressed by the liver.

It localises to the secreted. Its function is as follows. Inhibits basic phospholipase A2 isozymes PLA-B, BP-I and BP-II. The polypeptide is Phospholipase A2 inhibitor 1 (Protobothrops flavoviridis (Habu)).